Here is a 1541-residue protein sequence, read N- to C-terminus: Multiple epidermal growth factor-like domains protein 6 (1541 aa).

Positions 1-30 are cleaved as a signal peptide; it reads MSFLEEARAAGRAVVLALVLLLLPAVPVGA. The 82-residue stretch at 44–125 folds into the EMI domain; sequence MPHVCAEQEL…QQPDEEGCLS (82 aa). 15 cysteine pairs are disulfide-bonded: Cys48/Cys111, Cys77/Cys83, Cys110/Cys123, Cys128/Cys139, Cys133/Cys147, Cys149/Cys158, Cys165/Cys176, Cys172/Cys185, Cys187/Cys200, Cys242/Cys255, Cys248/Cys268, Cys270/Cys283, Cys289/Cys300, Cys296/Cys309, and Cys311/Cys324. Positions 124-159 constitute an EGF-like 1 domain; that stretch reads LSAECSASLCFHGGRCVPGSAQPCHCPPGFQGPRCQ. The region spanning 161–201 is the EGF-like 2; calcium-binding domain; it reads DVDECRTHNGGCQHRCVNTPGSYLCECKPGFRLHTDSRTCL. 2 consecutive EGF-like domains span residues 206 to 242 and 238 to 284; these read CALG…GRHC and DGRH…KACE. Asn252 carries an N-linked (GlcNAc...) asparagine glycan. Residues 285 to 325 form the EGF-like 5; calcium-binding domain; sequence DVDECAAGLAQCAHGCLNTQGSFKCVCHAGYELGADGRQCY. 2 EGF-like domains span residues 335 to 370 and 375 to 411; these read CEAN…QRTC and DCAD…CGCE. In terms of domain architecture, EGF-like 8; calcium-binding spans 412–452; sequence DVDECASSRGGCEHHCTNLAGSFQCSCEAGYRLHEDRRGCS. Disulfide bonds link Cys416/Cys427, Cys423/Cys436, Cys438/Cys451, Cys520/Cys533, Cys527/Cys540, Cys542/Cys551, Cys564/Cys576, Cys570/Cys583, Cys585/Cys594, Cys607/Cys619, Cys613/Cys626, and Cys628/Cys637. EGF-like domains lie at 516–552, 560–595, 603–638, 736–770, 783–814, 822–857, 865–901, 909–944, 955–987, 995–1030, 1038–1073, 1081–1116, 1124–1159, 1211–1246, 1254–1289, 1297–1332, 1345–1375, 1383–1418, and 1469–1504; these read FGHD…LICN, FGKN…TNCE, YGKH…RFCH, FGVN…EDCE, QEIC…SRCQ, YGPS…FSCQ, WGPD…PRCE, FGPG…TFCE, DCRS…PRCA, YGHN…PSCL, YGDN…LACE, VRAG…DKCQ, FGEA…SGCE, YGPG…TDCN, FGPN…VRCE, FGVG…RHCE, HLEC…QACE, HGAG…HFCE, and FGPS…PTCR. N-linked (GlcNAc...) asparagine glycosylation occurs at Asn739. 15 cysteine pairs are disulfide-bonded: Cys740/Cys751, Cys744/Cys758, Cys760/Cys769, Cys786/Cys795, Cys789/Cys802, Cys804/Cys813, Cys826/Cys838, Cys832/Cys845, Cys847/Cys856, Cys869/Cys882, Cys873/Cys889, Cys891/Cys900, Cys913/Cys925, Cys919/Cys932, and Cys934/Cys943. Intrachain disulfides connect Cys999-Cys1011, Cys1005-Cys1018, Cys1020-Cys1029, Cys1042-Cys1054, Cys1048-Cys1061, Cys1063-Cys1072, Cys1085-Cys1097, Cys1091-Cys1104, Cys1106-Cys1115, Cys1128-Cys1140, Cys1134-Cys1147, Cys1149-Cys1158, Cys1215-Cys1227, Cys1221-Cys1234, Cys1236-Cys1245, Cys1258-Cys1270, Cys1264-Cys1277, Cys1279-Cys1288, Cys1301-Cys1313, Cys1307-Cys1320, Cys1322-Cys1331, Cys1348-Cys1356, Cys1350-Cys1363, Cys1365-Cys1374, Cys1387-Cys1399, Cys1393-Cys1406, Cys1408-Cys1417, Cys1473-Cys1485, Cys1479-Cys1492, and Cys1494-Cys1503. Residues 1509–1541 are disordered; that stretch reads LRLPENPSLAQGSAGTLPASSRPTSRSGGPARH. Positions 1516–1535 are enriched in polar residues; that stretch reads SLAQGSAGTLPASSRPTSRS.

It is found in the secreted. The protein is Multiple epidermal growth factor-like domains protein 6 (MEGF6) of Homo sapiens (Human).